Here is a 256-residue protein sequence, read N- to C-terminus: MVLIKVLANLLVLQLSYAQKSSELVVGGDECNINEHRSLVFLYNNSFGCSGTLINQQWVLSAVHCDMENVRIYLGVHNLTLRNNAEIRLPEERFFCLSNKNYTKWDKDIMLIKLDRPVKTSTYIAPLSLPSSPPRVGSVCRIMGWGAITSPNETFPGVTHCANINILPYSVCRAAYKGLPAQSRTLCGGILEGGIGSCMGDSGGPLICNGEMHGIVAWGDDTCAQPHKPVHYTKVYDYTDWIQSIIAGNTAATCPP.

The first 18 residues, 1–18, serve as a signal peptide directing secretion; that stretch reads MVLIKVLANLLVLQLSYA. A propeptide spanning residues 19–24 is cleaved from the precursor; that stretch reads QKSSEL. The Peptidase S1 domain occupies 25–247; sequence VVGGDECNIN…YTDWIQSIIA (223 aa). 6 disulfides stabilise this stretch: C31–C161, C49–C65, C96–C254, C140–C208, C172–C187, and C198–C223. N-linked (GlcNAc...) asparagine glycosylation occurs at N44. Residue H64 is the Charge relay system of the active site. N-linked (GlcNAc...) asparagine glycans are attached at residues N78 and N101. D108 acts as the Charge relay system in catalysis. The N-linked (GlcNAc...) asparagine glycan is linked to N152. The active-site Charge relay system is the S202.

The protein belongs to the peptidase S1 family. Snake venom subfamily. In terms of assembly, monomer. As to expression, expressed by the venom gland.

It localises to the secreted. In terms of biological role, snake venom serine protease that has fibrinogenolytic activities by hydrolyzing the beta chain of fibrinogen (FGB). Typical arginine esterase which hydrolyzes esters and amides of arginine. The protein is Beta-fibrinogenase-like of Daboia siamensis (Eastern Russel's viper).